The following is a 453-amino-acid chain: Bifunctional protein GlmU (453 aa).

The segment at 1–226 is pyrophosphorylase; sequence MKFSAVILAA…PIEVEGVNDR (226 aa). Residues 8–11, Lys-22, Gln-73, 78–79, 100–102, Gly-137, Glu-151, Asn-166, and Asn-224 contribute to the UDP-N-acetyl-alpha-D-glucosamine site; these read LAAG, GT, and YGD. Asp-102 is a Mg(2+) binding site. Asn-224 contacts Mg(2+). The linker stretch occupies residues 227–247; it reads AQLARLERAFQAAQAKKLLEQ. An N-acetyltransferase region spans residues 248 to 453; sequence GVMLRDPARF…TGWQRPVKKK (206 aa). UDP-N-acetyl-alpha-D-glucosamine-binding residues include Arg-330 and Lys-348. His-360 (proton acceptor) is an active-site residue. UDP-N-acetyl-alpha-D-glucosamine-binding residues include Tyr-363 and Asn-374. Residues Ala-377, 383–384, Ser-402, Ala-420, and Arg-437 each bind acetyl-CoA; that span reads NY.

This sequence in the N-terminal section; belongs to the N-acetylglucosamine-1-phosphate uridyltransferase family. It in the C-terminal section; belongs to the transferase hexapeptide repeat family. Homotrimer. Requires Mg(2+) as cofactor.

It is found in the cytoplasm. The catalysed reaction is alpha-D-glucosamine 1-phosphate + acetyl-CoA = N-acetyl-alpha-D-glucosamine 1-phosphate + CoA + H(+). It carries out the reaction N-acetyl-alpha-D-glucosamine 1-phosphate + UTP + H(+) = UDP-N-acetyl-alpha-D-glucosamine + diphosphate. It participates in nucleotide-sugar biosynthesis; UDP-N-acetyl-alpha-D-glucosamine biosynthesis; N-acetyl-alpha-D-glucosamine 1-phosphate from alpha-D-glucosamine 6-phosphate (route II): step 2/2. The protein operates within nucleotide-sugar biosynthesis; UDP-N-acetyl-alpha-D-glucosamine biosynthesis; UDP-N-acetyl-alpha-D-glucosamine from N-acetyl-alpha-D-glucosamine 1-phosphate: step 1/1. Its pathway is bacterial outer membrane biogenesis; LPS lipid A biosynthesis. Functionally, catalyzes the last two sequential reactions in the de novo biosynthetic pathway for UDP-N-acetylglucosamine (UDP-GlcNAc). The C-terminal domain catalyzes the transfer of acetyl group from acetyl coenzyme A to glucosamine-1-phosphate (GlcN-1-P) to produce N-acetylglucosamine-1-phosphate (GlcNAc-1-P), which is converted into UDP-GlcNAc by the transfer of uridine 5-monophosphate (from uridine 5-triphosphate), a reaction catalyzed by the N-terminal domain. The protein is Bifunctional protein GlmU of Vibrio vulnificus (strain CMCP6).